Consider the following 39-residue polypeptide: MYKLATLEFIKKAKTLKLLSQKTQTTSKIQTFSSIKLLI.

This is an uncharacterized protein from Dictyostelium discoideum (Social amoeba).